Reading from the N-terminus, the 144-residue chain is uncharacterized protein (144 aa).

The tract at residues 98-127 (PLADGATVDSQASENGEKEAQPTPPKEGLL) is disordered.

This is an uncharacterized protein from Aedes vexans (Inland floodwater mosquito).